A 634-amino-acid chain; its full sequence is Pescadillo homolog (634 aa).

One can recognise a BRCT domain in the interval 321 to 414 (RLRTLFKGLK…QLLPTNKYFM (94 aa)). Disordered regions lie at residues 437 to 473 (EEKALHDPSLIETHVQSDDDDDDSDAEADNQEEEEIE), 491 to 561 (EYKK…RKAE), and 603 to 634 (NIDADAKEAKKTAKREAKKAAAEAAAKALKMA). A Phosphoserine modification is found at Ser-453. Composition is skewed to acidic residues over residues 454-473 (DDDDDDSDAEADNQEEEEIE) and 501-527 (VNEDEEDSVDDDDEEDEEEEEEEDVEQ). Coiled coils occupy residues 460–546 (SDAE…KVES) and 596–629 (LLRKKRRNIDADAKEAKKTAKREAKKAAAEAAAK). Basic and acidic residues-rich tracts occupy residues 528-548 (LDDKTKRLLEEKQKMKVESGK) and 603-623 (NIDADAKEAKKTAKREAKKAA). Residues 624 to 634 (AEAAAKALKMA) show a composition bias toward low complexity.

This sequence belongs to the pescadillo family.

The protein localises to the nucleus. It is found in the nucleolus. Its subcellular location is the nucleoplasm. Its function is as follows. Required for maturation of ribosomal RNAs and formation of the large ribosomal subunit. The chain is Pescadillo homolog from Drosophila willistoni (Fruit fly).